Reading from the N-terminus, the 470-residue chain is Syncoilin (470 aa).

Positions 1-43 (MASPEPLRGGDGARASREPHTEASFPLQESESPKEAKTFNPEA) are disordered. A head region spans residues 1–148 (MASPEPLRGG…TEGSLPAQPI (148 aa)). Position 32 is a phosphoserine (Ser32). The IF rod domain occupies 157 to 452 (SVEDLERLEA…AMLPKSLEQA (296 aa)). The segment at 158-192 (VEDLERLEARFQQCVQAVSQLEEERDQLIHELVLL) is coil 1A. A linker 1 region spans residues 193–219 (REPALQEVQQVHQDILAAYKLHAQAEL). Positions 220 to 297 (ERDGLREEIR…KEQLQQQLEA (78 aa)) are coil 1b. Residues 298–337 (PPTQSDGHFLQESRRLSTQFENLMAESRQGLEEEYEPQLL) are linker 2. Residue Ser314 is modified to Phosphoserine. Positions 338 to 445 (RLLERKEAGT…EELSTYKAML (108 aa)) are coil 2. The tract at residues 446 to 470 (PKSLEQADAPTSQAGGVEAQSPGTV) is disordered. The tract at residues 446–470 (PKSLEQADAPTSQAGGVEAQSPGTV) is tail.

This sequence belongs to the intermediate filament family. In terms of assembly, may link the dystrophin-associated glycoprotein complex (DAPC) to intracellular desmin (DES) filaments. Interacts with DES and DTNA. As to expression, detected strongly in skeletal muscle and heart and weakly in lung (at protein level). Highly expressed in skeletal muscle and lung and weakly in lung and testis.

Its subcellular location is the cytoplasm. It is found in the perinuclear region. Its function is as follows. Atypical type III intermediate filament (IF) protein that may play a supportive role in the efficient coupling of mechanical stress between the myofibril and fiber exterior. May facilitate lateral force transmission during skeletal muscle contraction. Does not form homofilaments nor heterofilaments with other IF proteins. This Mus musculus (Mouse) protein is Syncoilin (Sync).